Consider the following 1350-residue polypeptide: MQHGSLGPSSSSRKTTVTSTAGSVHLHHRSSNGFSTASRAQLNRHNEMDFGKMFAAMEKGHKVCKIAVLKKWDPAYKQLTLDRYSRQIFLTKLELSAVRNKPTILDIRQIREVQTLNYKLNTIKVDDKWKKDREIVNFDSKAILIISYGMGFALSYWILLFESEDACKLWSQGLHNLMMDTRDRDSSPHPLRIERFLHKHFLSLMSPANDAVARKHMKPFVQTSLQFKVQSDQLQQVTEDQMNSDQFSFASRQLIHVPELFSSRFADLAEKHERKGLVVTFQNFLRFLDGKQFDELASNRTRALEFLNRYFQEDQAYFGDRNEPSMTVFEFCDFLFSRENSLWDPTNEKVTHDMSRPLSHYWIASSHNTYLTGDQLRSESSLDCYAQALLMGCRCIELDCWDGQKKPGSAEFIDIVIYHGYTMTSKILLRDVLHVIRHYAFVTSEYPVILSIEDNCSVPAQRLLAQELKDILGDYLLTQPANREEKQLPSPAALKKKIIVKHKKLPIESEDLAAVVKTDEFQDTEIISRECVKKGILMVKNNNSHEWTSHVFILFPDRLCYLIQTADPENPNDDTVSVSGDEEREEETPSGFGVKPEEMHVTEEWFHGRCERDEAKKRILEHKEKGNGLFMIRDSNLFIGDFSLSILHDGKVHHVRIRSKIIDKEKKYYFMDNKVCDTLYELVSYYTRHYLTTAHFKMVLTIPCPQPQPHLNQPWFSATADKEKAEELLSLVPEDGAFLIRTSSTDSSVYVLSLKVDGEFWHYRLKRDGRIFVVNQKVFENLNQIVEFYANREFVRGISLRFPVNEKDISHLTAELAEARTPGCYMDLKDLDKEVQARALRPYRGTADDELSFPANVIITVLRKEEGLWRGRYGSLTGWFPSAHVQEILPEKVSTSETSNYNTIELAGTLIERIHDADRPNVIRISQSNQHWMNKQYYLLAASSSEEADGWQNNLFELTRSVNTKMSILRTKEKEKRIAAELSNLVVYCQAVPFDPAHIYNDAFYEMCSFVEGKLDKLVEKGLLPFNSRKLSRVYPNGSRITSNNYSPVPMWNAGCHMVALNYQTGDKPMQLNQGKFLANGRCGYLLKPDYMLTDDFDPTNTEKFATAYPIRLNVQVIGGRHLSRKDKNKGICSPFVEIEIIGMPCDTKVFQTKTIASNGLNPIWNQTFTFEIQCPEVALIRFHVEDGDFVGPKTDPFIGQAVFPVDSIRCGFRSVPLKNQYSEELELSSLLVDVQMCSREGTQLIRSSSHFLQASRLAPVFAHRKITNGDSIPREMAPRLRTSATDRSLDSPTNSESRATLLSGQRGSQDSMDSAAETSSIASGTISSRDGKKKQNWLKKFSFGKSSKS.

The disordered stretch occupies residues 1–40 (MQHGSLGPSSSSRKTTVTSTAGSVHLHHRSSNGFSTASRA). Low complexity predominate over residues 9-20 (SSSSRKTTVTST). Positions 31–40 (SNGFSTASRA) are enriched in polar residues. The PI-PLC X-box domain occupies 352-503 (HDMSRPLSHY…LKKKIIVKHK (152 aa)). Active-site residues include histidine 367 and histidine 419. Positions 570-594 (NPNDDTVSVSGDEEREEETPSGFGV) are disordered. 2 SH2 domains span residues 605-704 (WFHG…TIPC) and 715-804 (WFSA…RFPV). Positions 832–890 (DKEVQARALRPYRGTADDELSFPANVIITVLRKEEGLWRGRYGSLTGWFPSAHVQEILP) constitute an SH3 domain. The PH domain occupies 855–960 (ANVIITVLRK…WQNNLFELTR (106 aa)). In terms of domain architecture, PI-PLC Y-box spans 982–1092 (LSNLVVYCQA…CGYLLKPDYM (111 aa)). Positions 1099 to 1220 (PTNTEKFATA…CGFRSVPLKN (122 aa)) constitute a C2 domain. The disordered stretch occupies residues 1270 to 1350 (GDSIPREMAP…KFSFGKSSKS (81 aa)). Residues 1283–1329 (TSATDRSLDSPTNSESRATLLSGQRGSQDSMDSAAETSSIASGTISS) show a composition bias toward polar residues. Positions 1340-1350 (KKFSFGKSSKS) are enriched in low complexity.

Ca(2+) serves as cofactor. In terms of tissue distribution, expressed in intestine, isthmus of the pharynx, proximal gonad sheath cells, spermatheca and uterine sheath cells. In males, expressed in the valve cell, the vas deferens and retractor and ventral protactor muscles.

It carries out the reaction a 1,2-diacyl-sn-glycero-3-phospho-(1D-myo-inositol-4,5-bisphosphate) + H2O = 1D-myo-inositol 1,4,5-trisphosphate + a 1,2-diacyl-sn-glycerol + H(+). Its function is as follows. Mediates the production of the second messenger molecules diacylglycerol (DAG) and inositol 1,4,5-trisphosphate (IP3) which plays an important role in the regulation of intracellular signaling cascades. Regulates basal and ovulatory sheath cell contractions by controlling Ca(2+) oscillations via IP3-mediated activation of IP3 receptor itr-1. In intestinal epithelial cells, regulates Ca(2+) oscillations which control posterior body wall muscle contractions required for defecation by IP3-mediated activation of itr-1 and probably by activating TRPM channels gon-2 and gtl-1 by reducing PIP2 levels. By activating tpa-1 via DAG production, required for the expression of antimicrobial peptide nlp-29 in the epidermis in response to fungal infection or physical injury. By triggering Ca(2+) transient via IP3-mediated activation of IPR3 receptor itr-1 in ASH sensory neurons, involved in avoidance behavior in response to nose touch. Probably by regulating neuronal transmission in ALA neurons, mediates the decrease in pharyngeal pumping and locomotion during the quiescent state that precedes each larval molt, downstream of lin-3 and receptor let-23 and upstream of tpa-1 but not itr-1. During embryogenesis, may play an role in epidermal morphogenesis together with plc-1. Probably downstream of receptor daf-2, regulates male-sex muscle excitability in the absence of food. The polypeptide is 1-phosphatidylinositol 4,5-bisphosphate phosphodiesterase gamma plc-3 (Caenorhabditis elegans).